A 494-amino-acid chain; its full sequence is MKKQVTFKPFRLSPVDHSLPKVYIFKSLYFRGVDDTGSLSRLQDGIDRLISCLPFLSGEVVPCADIPDKVGVLQVQMPCPSLQEIPMLLVKSYPNHTWPAASTSERWRNTALLDQSYRPLPDFIPPSKPRPVLRFQANFLADGLMLCMGYNHSVFDGTGAGNILEMLADCCRANPNSILALPTNGDIESELRGLLSSPGVAVANASQEAYAINCAHTEVEPEPSSAMLYCWPFLLSSEKIECLQEACNSLLPHIVRLYSGTQSSLINQDTNWPHILSSNDVLTALLAVSIEKAREATGALGHMSRSLAMAVNLRERLKPMPRHYLGNLVTTVWVSHHRPAVKDLETMVLPVPACNRHEIDRDDLLWITHVAFRIRLGLNAINEEHIRGLIHYLHSQDDWEQIGIHFTDPIFISSWRHLKVYELDFGPTIGHAEHFEMDVGTTDGVCVVMPANTRAVGKTKKAPWDIRIVLNPEVLQALIASAIFGWAMVKDAST.

Belongs to the fumigaclavine B O-acetyltransferase family. In terms of assembly, monomer.

It carries out the reaction fumigaclavine B + acetyl-CoA = fumigaclavine A + CoA. It functions in the pathway alkaloid biosynthesis; ergot alkaloid biosynthesis. Its function is as follows. Fumigaclavine B O-acetyltransferase; part of the gene cluster that mediates the biosynthesis of fumiclavanine C, a fungal ergot alkaloid. DmaW catalyzes the first step of ergot alkaloid biosynthesis by condensing dimethylallyl diphosphate (DMAP) and tryptophan to form 4-dimethylallyl-L-tryptophan. The second step is catalyzed by the methyltransferase easF that methylates 4-dimethylallyl-L-tryptophan in the presence of S-adenosyl-L-methionine, resulting in the formation of 4-dimethylallyl-L-abrine. The catalase easC and the FAD-dependent oxidoreductase easE then transform 4-dimethylallyl-L-abrine to chanoclavine-I which is further oxidized by EasD in the presence of NAD(+), resulting in the formation of chanoclavine-I aldehyde. EasA reduces chanoclavine-I aldehyde to dihydrochanoclavine-I aldehyde that spontaneously dehydrates to form 6,8-dimethyl-6,7-didehydroergoline. EasG then catalyzes the reduction of 6,8-dimethyl-6,7-didehydroergoline to form festuclavine. Hydrolysis of festuclavine by easM then leads to the formation of fumigaclavine B which is in turn acetylated by easN to fumigaclavine A. Finally, easL catalyzes the conversion of fumigaclavine A into fumigaclavine C by attaching a dimethylallyl moiety to C-2 of the indole nucleus. This Aspergillus fumigatus (strain ATCC MYA-4609 / CBS 101355 / FGSC A1100 / Af293) (Neosartorya fumigata) protein is Fumigaclavine B O-acetyltransferase easN.